The following is a 251-amino-acid chain: Probable transcriptional regulatory protein TGRD_462 (251 aa).

Belongs to the TACO1 family.

It is found in the cytoplasm. The chain is Probable transcriptional regulatory protein TGRD_462 from Endomicrobium trichonymphae.